The chain runs to 733 residues: ATP-dependent RNA helicase DBP7 (733 aa).

2 disordered regions span residues 1–92 (MDED…SKMI) and 119–139 (SSQL…SNAP). A compositionally biased stretch (polar residues) spans 17 to 30 (SVSSGSNKRTTSKV). Residues 52–80 (QKKDRSATGKDDGKKHENDESNDSKKRPT) are compositionally biased toward basic and acidic residues. The short motif at 144-173 (STFEGLGINERLSKHLTETLRFKNPTKVQK) is the Q motif element. Residues 177–372 (PTMLSTERDL…SIILNNPEMI (196 aa)) form the Helicase ATP-binding domain. Position 190–197 (190–197 (AQTGSGKT)) interacts with ATP. Residues 304–307 (DEGD) carry the DEAD box motif. Residues 406-596 (TLSAILKKIS…NYENYLKDGF (191 aa)) enclose the Helicase C-terminal domain. Residues 687 to 714 (KKLGKSVESNSGIQGASKKTKKEDPRKK) are disordered.

It belongs to the DEAD box helicase family. DDX31/DBP7 subfamily.

It localises to the nucleus. The protein resides in the nucleolus. It carries out the reaction ATP + H2O = ADP + phosphate + H(+). In terms of biological role, ATP-binding RNA helicase involved in the biogenesis of 60S ribosomal subunits and is required for the normal formation of 25S and 5.8S rRNAs. This chain is ATP-dependent RNA helicase DBP7 (DPB7), found in Scheffersomyces stipitis (strain ATCC 58785 / CBS 6054 / NBRC 10063 / NRRL Y-11545) (Yeast).